A 115-amino-acid chain; its full sequence is Large ribosomal subunit protein bL19 (115 aa).

This sequence belongs to the bacterial ribosomal protein bL19 family.

Functionally, this protein is located at the 30S-50S ribosomal subunit interface and may play a role in the structure and function of the aminoacyl-tRNA binding site. The polypeptide is Large ribosomal subunit protein bL19 (Lactobacillus acidophilus (strain ATCC 700396 / NCK56 / N2 / NCFM)).